A 486-amino-acid chain; its full sequence is Cardiolipin synthase A (486 aa).

A run of 2 helical transmembrane segments spans residues 3–23 (TVYT…IAGV) and 38–58 (MAWL…YLAV). 2 consecutive PLD phosphodiesterase domains span residues 219–246 (MDLR…VDPR) and 399–426 (EGGL…DMRS). Active-site residues include histidine 224, lysine 226, aspartate 231, histidine 404, lysine 406, and aspartate 411.

This sequence belongs to the phospholipase D family. Cardiolipin synthase subfamily. ClsA sub-subfamily.

The protein resides in the cell inner membrane. The catalysed reaction is 2 a 1,2-diacyl-sn-glycero-3-phospho-(1'-sn-glycerol) = a cardiolipin + glycerol. In terms of biological role, catalyzes the reversible phosphatidyl group transfer from one phosphatidylglycerol molecule to another to form cardiolipin (CL) (diphosphatidylglycerol) and glycerol. In Escherichia coli O7:K1 (strain IAI39 / ExPEC), this protein is Cardiolipin synthase A.